The chain runs to 314 residues: tRNA dimethylallyltransferase (314 aa).

Residues methionine 1 to leucine 24 are disordered. Glycine 40–serine 47 is an ATP binding site. Threonine 42–serine 47 serves as a coordination point for substrate.

The protein belongs to the IPP transferase family. In terms of assembly, monomer. Mg(2+) is required as a cofactor.

The catalysed reaction is adenosine(37) in tRNA + dimethylallyl diphosphate = N(6)-dimethylallyladenosine(37) in tRNA + diphosphate. Catalyzes the transfer of a dimethylallyl group onto the adenine at position 37 in tRNAs that read codons beginning with uridine, leading to the formation of N6-(dimethylallyl)adenosine (i(6)A). The protein is tRNA dimethylallyltransferase of Cereibacter sphaeroides (strain ATCC 17029 / ATH 2.4.9) (Rhodobacter sphaeroides).